The chain runs to 582 residues: ATP-dependent lipid A-core flippase (582 aa).

5 helical membrane passes run 16 to 36 (LWPT…ALIL), 63 to 83 (VLVW…ITSY), 153 to 173 (IIGL…ILIV), 253 to 273 (PIIQ…ASFP), and 275 to 295 (VMDS…IALM). Positions 28–310 (IVAGVALILN…LTNVNAQFQR (283 aa)) constitute an ABC transmembrane type-1 domain. The 237-residue stretch at 342–578 (VEFRNVTFTY…RGVYAQLHKM (237 aa)) folds into the ABC transporter domain. 376–383 (GRSGSGKS) serves as a coordination point for ATP.

It belongs to the ABC transporter superfamily. Lipid exporter (TC 3.A.1.106) family. Homodimer.

It localises to the cell inner membrane. The catalysed reaction is ATP + H2O + lipid A-core oligosaccharideSide 1 = ADP + phosphate + lipid A-core oligosaccharideSide 2.. Its function is as follows. Involved in lipopolysaccharide (LPS) biosynthesis. Translocates lipid A-core from the inner to the outer leaflet of the inner membrane. Transmembrane domains (TMD) form a pore in the inner membrane and the ATP-binding domain (NBD) is responsible for energy generation. This Escherichia coli O157:H7 protein is ATP-dependent lipid A-core flippase.